Reading from the N-terminus, the 362-residue chain is Divinyl chlorophyll a/b light-harvesting protein PcbF (362 aa).

6 consecutive transmembrane segments (helical) span residues 27-47 (FIGS…ANTL), 89-109 (IAFI…AGLL), 150-170 (FILG…VEWA), 211-231 (VMGG…FHIA), 251-271 (AVLS…AFWC), and 316-336 (LANV…WHAI).

The protein belongs to the PsbB/PsbC family. IsiA/Pcb subfamily. As to quaternary structure, the antenna complex consists of divinyl chlorophylls (a and b) and divinyl chlorophyll a/b binding proteins and binds more divinyl chlorophyll b than does the antenna complex from high-light-adapted Prochlorococcus. Requires divinyl chlorophyll a as cofactor. The cofactor is divinyl chlorophyll b.

It localises to the cellular thylakoid membrane. In terms of biological role, the antenna complex functions as a light receptor, it captures and delivers excitation energy to photosystems II and I. The Prochlorales pcb genes are not related to higher plant LHCs. This chain is Divinyl chlorophyll a/b light-harvesting protein PcbF (pcbF), found in Prochlorococcus marinus (strain NATL2A).